We begin with the raw amino-acid sequence, 349 residues long: Protein RecA (349 aa).

65 to 72 (GPESSGKT) is an ATP binding site.

Belongs to the RecA family.

It localises to the cytoplasm. Its function is as follows. Can catalyze the hydrolysis of ATP in the presence of single-stranded DNA, the ATP-dependent uptake of single-stranded DNA by duplex DNA, and the ATP-dependent hybridization of homologous single-stranded DNAs. It interacts with LexA causing its activation and leading to its autocatalytic cleavage. This Enterococcus faecium (Streptococcus faecium) protein is Protein RecA.